The following is a 1158-amino-acid chain: ATP-dependent helicase/deoxyribonuclease subunit B (1158 aa).

Positions 1-275 (MTLHAYLGRA…QYFNQLYRFN (275 aa)) constitute a UvrD-like helicase ATP-binding domain. Position 8–15 (8–15 (GRAGTGKS)) interacts with ATP. In terms of domain architecture, UvrD-like helicase C-terminal spans 269–583 (NQLYRFNNQD…SIGTMDLAKV (315 aa)). Residues C784, C1112, C1115, and C1121 each coordinate [4Fe-4S] cluster.

The protein belongs to the helicase family. AddB/RexB type 1 subfamily. In terms of assembly, heterodimer of AddA and AddB. Mg(2+) is required as a cofactor. Requires [4Fe-4S] cluster as cofactor.

Its function is as follows. The heterodimer acts as both an ATP-dependent DNA helicase and an ATP-dependent, dual-direction single-stranded exonuclease. Recognizes the chi site generating a DNA molecule suitable for the initiation of homologous recombination. The AddB subunit has 5' -&gt; 3' nuclease activity but not helicase activity. The sequence is that of ATP-dependent helicase/deoxyribonuclease subunit B from Staphylococcus aureus (strain USA300).